The following is a 462-amino-acid chain: Glutamate decarboxylase alpha (462 aa).

Lysine 273 carries the post-translational modification N6-(pyridoxal phosphate)lysine.

The protein belongs to the group II decarboxylase family. Pyridoxal 5'-phosphate serves as cofactor.

It carries out the reaction L-glutamate + H(+) = 4-aminobutanoate + CO2. Functionally, converts internalized glutamate to GABA and increases the internal pH. Involved in glutamate-dependent acid resistance in gastric fluid. The protein is Glutamate decarboxylase alpha (gadA) of Listeria monocytogenes serovar 1/2a (strain ATCC BAA-679 / EGD-e).